A 395-amino-acid chain; its full sequence is Flap endonuclease 1 (395 aa).

The N-domain stretch occupies residues 1–108 (MGILGLSKLL…DELEMRRQKA (108 aa)). Residue D34 coordinates Mg(2+). R74 contacts DNA. D90 lines the Mg(2+) pocket. Positions 116-136 (EKAKDAGDDEMMEKMSKRTVR) are disordered. An I-domain region spans residues 126–257 (MMEKMSKRTV…QKAWEGIQRY (132 aa)). Residues E162, E164, D183, and D185 each contribute to the Mg(2+) site. A DNA-binding site is contributed by E162. DNA-binding residues include G235 and D237. D237 contributes to the Mg(2+) binding site. The interval 340–348 (TQGRLDSFF) is interaction with PCNA.

This sequence belongs to the XPG/RAD2 endonuclease family. FEN1 subfamily. As to quaternary structure, interacts with PCNA. Three molecules of FEN1 bind to one PCNA trimer with each molecule binding to one PCNA monomer. PCNA stimulates the nuclease activity without altering cleavage specificity. Requires Mg(2+) as cofactor. Phosphorylated. Phosphorylation upon DNA damage induces relocalization to the nuclear plasma.

The protein resides in the nucleus. It localises to the nucleolus. The protein localises to the nucleoplasm. It is found in the mitochondrion. Structure-specific nuclease with 5'-flap endonuclease and 5'-3' exonuclease activities involved in DNA replication and repair. During DNA replication, cleaves the 5'-overhanging flap structure that is generated by displacement synthesis when DNA polymerase encounters the 5'-end of a downstream Okazaki fragment. It enters the flap from the 5'-end and then tracks to cleave the flap base, leaving a nick for ligation. Also involved in the long patch base excision repair (LP-BER) pathway, by cleaving within the apurinic/apyrimidinic (AP) site-terminated flap. Acts as a genome stabilization factor that prevents flaps from equilibrating into structures that lead to duplications and deletions. Also possesses 5'-3' exonuclease activity on nicked or gapped double-stranded DNA, and exhibits RNase H activity. Also involved in replication and repair of rDNA and in repairing mitochondrial DNA. This Leishmania major protein is Flap endonuclease 1.